The primary structure comprises 143 residues: Hemoglobin subunit alpha (143 aa).

Residues 3–143 enclose the Globin domain; the sequence is KLSGEDKANV…TMRLCISKYR (141 aa). H60 lines the O2 pocket. H89 contacts heme b.

Belongs to the globin family. As to quaternary structure, heterotetramer of two alpha chains and two beta chains. Red blood cells.

Involved in oxygen transport from the lung to the various peripheral tissues. The polypeptide is Hemoglobin subunit alpha (HBA) (Ambystoma mexicanum (Axolotl)).